A 283-amino-acid chain; its full sequence is Protease HtpX (283 aa).

Transmembrane regions (helical) follow at residues 4-24 (ILLF…ILNV) and 33-53 (GGIL…SLFL). Position 139 (histidine 139) interacts with Zn(2+). The active site involves glutamate 140. Histidine 143 serves as a coordination point for Zn(2+). Helical transmembrane passes span 147-167 (GDMV…IFLS) and 190-210 (IYFL…SIIA). Zn(2+) is bound at residue glutamate 218.

This sequence belongs to the peptidase M48B family. Requires Zn(2+) as cofactor.

The protein localises to the cell inner membrane. The protein is Protease HtpX of Haemophilus influenzae (strain 86-028NP).